The primary structure comprises 244 residues: MSTSKRKRGDDANWNKRTTKKKPSSAGLKKAGSKAERPSLQIQTLQHAGSTMITVPSGGVCDLINTYARGSDEGNRHTSETLTYKIAVDYHFVADSQACKYSNTGTGVMWLVYDTTPGGQAPTPQTIFAYPDTLKAWPATWKVSRELCHRFVVKRRWLFNMETDGRIGSDIPPSNASWKPCKRNIYFHKFTSGLGVRTQWKNVTDGGVGAIQRGALYMVIAPGNGLTFTAHGQTRLYFKSVGNQ.

The Bipartite nuclear localization signal signature appears at 1 to 24; sequence MSTSKRKRGDDANWNKRTTKKKPS. The tract at residues 1–39 is disordered; it reads MSTSKRKRGDDANWNKRTTKKKPSSAGLKKAGSKAERPS.

It belongs to the geminiviridae capsid protein family. In terms of assembly, homomultimer. Interacts with the movement protein. Binds to single-stranded and double-stranded viral DNA.

It localises to the virion. Its subcellular location is the host nucleus. Encapsidates the viral genome into characteristic twinned ('geminate') particles. Binds the genomic viral ssDNA and shuttles it into and out of the cell nucleus. Plays a role in protection of the genome from degradation, virus acquisition and transmission by insect vectors, infectivity, and systemic movement. The CP of monopartite geminiviruses is absolutely essential for virus movement. The chain is Capsid protein from Maize streak virus genotype B (isolate Tas) (MSV).